Reading from the N-terminus, the 633-residue chain is Glutamyl-tRNA(Gln) amidotransferase subunit E (633 aa).

Positions 415 to 437 (LDDGTTKFLRPQPGSARMYPETD) are disordered.

The protein belongs to the GatB/GatE family. GatE subfamily. Heterodimer of GatD and GatE.

It catalyses the reaction L-glutamyl-tRNA(Gln) + L-glutamine + ATP + H2O = L-glutaminyl-tRNA(Gln) + L-glutamate + ADP + phosphate + H(+). In terms of biological role, allows the formation of correctly charged Gln-tRNA(Gln) through the transamidation of misacylated Glu-tRNA(Gln) in organisms which lack glutaminyl-tRNA synthetase. The reaction takes place in the presence of glutamine and ATP through an activated gamma-phospho-Glu-tRNA(Gln). The GatDE system is specific for glutamate and does not act on aspartate. The chain is Glutamyl-tRNA(Gln) amidotransferase subunit E from Saccharolobus solfataricus (strain ATCC 35092 / DSM 1617 / JCM 11322 / P2) (Sulfolobus solfataricus).